Reading from the N-terminus, the 86-residue chain is uncharacterized protein (86 aa).

It to C.jejuni CJ0253.

This is an uncharacterized protein from Helicobacter pylori (strain J99 / ATCC 700824) (Campylobacter pylori J99).